Consider the following 439-residue polypeptide: MARKRTNKRNNSDKENGNVGVVQNKDSASSKTTEPARLTKHKSLARKPSQNFITRTIWTFLLLGIFFTALAMGHFWVVLLVTIVQIGVYKEVIAIASVPSREKDLPWTRFINWYFLMTTLYYAYGESIYAYFHHLFIMDSFMLPLVLHHRFISFMLYIIGFVLFVASLKKGNYKFQFSQFCWTHMTLLLVVGQSHFMINNLFEGLFWFFVPVCYVVCNDVFAYLCGKMFGKHPLIQVSPKKTVEGFLGGWICTVVIGSLISYVLMHFKYFICPTRDLSTSAFSGLNCTPNSVFLPHTYTIPAVFVDTFRLPETITLAPIYFHLAIFATFSSLIAPFGGFFASGLKRAFKIKDFGASIPGHGGLTDRMDCQFLNGVFVYMYFQSFIAEKSTSVADLLDTAVYSLTTTQQVQLVEDLQNYLISHGKTSVQAICSKLLQNSK.

The disordered stretch occupies residues 1 to 37 (MARKRTNKRNNSDKENGNVGVVQNKDSASSKTTEPAR). Phosphoserine is present on S12. Residues 24–33 (NKDSASSKTT) show a composition bias toward polar residues. 7 consecutive transmembrane segments (helical) span residues 52–71 (FITRTIWTFLLLGIFFTALA), 76–98 (WVVLLVTIVQIGVYKEVIAIASV), 110–130 (FINWYFLMTTLYYAYGESIYA), 145–165 (LVLHHRFISFMLYIIGFVLFV), 180–199 (FCWTHMTLLLVVGQSHFMIN), 245–265 (GFLGGWICTVVIGSLISYVLM), and 321–341 (FHLAIFATFSSLIAPFGGFFA).

This sequence belongs to the CDS family. Requires Mg(2+) as cofactor.

It is found in the endoplasmic reticulum membrane. It carries out the reaction a 1,2-diacyl-sn-glycero-3-phosphate + CTP + H(+) = a CDP-1,2-diacyl-sn-glycerol + diphosphate. It participates in phospholipid metabolism; CDP-diacylglycerol biosynthesis; CDP-diacylglycerol from sn-glycerol 3-phosphate: step 3/3. Supplies CDP-diacylglycerol, which may play an important role as both a precursor to phosphoinositide biosynthesis in the plasma membrane and as a negative effector of phosphatidylinositol 4-kinase activity, thereby exerting an effect on cell proliferation via a lipid-dependent signal transduction cascade. The protein is Putative phosphatidate cytidylyltransferase of Schizosaccharomyces pombe (strain 972 / ATCC 24843) (Fission yeast).